The chain runs to 156 residues: Transcription elongation factor GreA (156 aa).

Residues 46–73 (AEYHAAREKQSFIEGRIKELEALLSLAE) adopt a coiled-coil conformation.

It belongs to the GreA/GreB family.

Necessary for efficient RNA polymerase transcription elongation past template-encoded arresting sites. The arresting sites in DNA have the property of trapping a certain fraction of elongating RNA polymerases that pass through, resulting in locked ternary complexes. Cleavage of the nascent transcript by cleavage factors such as GreA or GreB allows the resumption of elongation from the new 3'terminus. GreA releases sequences of 2 to 3 nucleotides. The polypeptide is Transcription elongation factor GreA (Cereibacter sphaeroides (strain ATCC 17025 / ATH 2.4.3) (Rhodobacter sphaeroides)).